Here is a 232-residue protein sequence, read N- to C-terminus: Ion-translocating oxidoreductase complex subunit E (232 aa).

The next 6 membrane-spanning stretches (helical) occupy residues leucine 12 to valine 31, leucine 39 to leucine 59, isoleucine 69 to alanine 89, phenylalanine 92 to isoleucine 112, alanine 125 to leucine 145, and proline 182 to glycine 202.

This sequence belongs to the NqrDE/RnfAE family. In terms of assembly, the complex is composed of six subunits: RnfA, RnfB, RnfC, RnfD, RnfE and RnfG.

It localises to the cell inner membrane. Its function is as follows. Part of a membrane-bound complex that couples electron transfer with translocation of ions across the membrane. This Sodalis glossinidius (strain morsitans) protein is Ion-translocating oxidoreductase complex subunit E.